A 329-amino-acid chain; its full sequence is tRNA (cytidine(32)/guanosine(34)-2'-O)-methyltransferase (329 aa).

Residues G53, W55, D75, D91, and D116 each coordinate S-adenosyl-L-methionine. The active-site Proton acceptor is the K156. The segment at 221-240 (DFNQLDGPTRIIVPFVTCGD) is required for binding to WDR6. S271 carries the phosphoserine modification.

Belongs to the class I-like SAM-binding methyltransferase superfamily. RNA methyltransferase RlmE family. TRM7 subfamily. As to quaternary structure, interacts with WDR6; the interaction is direct, and required for 2'-O-methylation of position 34 in substrate tRNAs. In terms of tissue distribution, found in fetal brain, lung, liver and kidney. Widely expressed in adult tissue; with high expression in heart and liver, lower expression in skeletal muscle, kidney, and pancreas and also lowly expressed in brain and lung. In the adult brain, expressed in amygdala, caudate nucleus, corpus callosum, hippocampus and thalamus.

Its subcellular location is the cytoplasm. The protein localises to the nucleus. The enzyme catalyses cytidine(32)/guanosine(34) in tRNA + 2 S-adenosyl-L-methionine = 2'-O-methylcytidine(32)/2'-O-methylguanosine(34) in tRNA + 2 S-adenosyl-L-homocysteine + 2 H(+). Inhibited by 2,6-diaminopurine (DAP); inhibition promotes UGA stop-codon readthrough during translation by misincorporation of tRNA(Trp) in the nascent polypeptide. Its function is as follows. Methylates the 2'-O-ribose of nucleotides at positions 32 and 34 of the tRNA anticodon loop of substrate tRNAs. Requisite for faithful cytoplasmic translation. Requires THADA for methylation of the nucleotide at position 32 of the anticodon loop of substrate tRNAs. Requires WDR6 for methylation of the nucleotide at position 34 of the anticodon loop of substrate tRNAs. Promotes translation efficiency of the UUU codon. Plays a role in neurogenesis. Required for expression of genes involved in neurogenesis, mitochondrial translation and energy generation, and lipid biosynthesis. Requisite for RNA-mediated gene silencing. May modify position 32 in tRNA(Arg(ACG)), tRNA(Arg(CCG)), tRNA(Arg(UCG)), tRNA(Cys(GCA)), tRNA(Cys(ACA)), tRNA(Gln(CUG)), tRNA(Gln(UUG)), tRNA(Gly(CCC)), tRNA(Leu(CAG))/tRNA(Leu(CAA)), tRNA(Leu(A/IAG)), tRNA(Leu(UAG)), tRNA(Phe(GAA)), tRNA(Pro(AGG))/tRNA(Pro(CGG))/tRNA(Pro(UGG)) and tRNA(Trp(CCA)), and position 34 in tRNA(Phe(GAA)), tRNA(Leu(CAA)), tRNA(Sec(UCA)), and tRNA(Trp(CCA)). The chain is tRNA (cytidine(32)/guanosine(34)-2'-O)-methyltransferase from Homo sapiens (Human).